We begin with the raw amino-acid sequence, 270 residues long: tRNA pseudouridine synthase A (270 aa).

D60 serves as the catalytic Nucleophile. The RNA binding stretch occupies residues 107–111; it reads FHARF. Residue Y118 coordinates substrate. The interval 168–172 is interaction with tRNA; sequence QCQSR.

This sequence belongs to the tRNA pseudouridine synthase TruA family. Homodimer.

It carries out the reaction uridine(38/39/40) in tRNA = pseudouridine(38/39/40) in tRNA. In terms of biological role, formation of pseudouridine at positions 38, 39 and 40 in the anticodon stem and loop of transfer RNAs. This Shigella boydii serotype 18 (strain CDC 3083-94 / BS512) protein is tRNA pseudouridine synthase A.